Consider the following 101-residue polypeptide: Large ribosomal subunit protein P1 (101 aa).

A compositionally biased stretch (low complexity) spans 61–72; that stretch reads AAPAAAAAPAAA. The disordered stretch occupies residues 61–101; the sequence is AAPAAAAAPAAAEEAEEEAEEEEEEEEAEEEAAAGLGALFG. The segment covering 73–92 has biased composition (acidic residues); sequence EEAEEEAEEEEEEEEAEEEA.

This sequence belongs to the eukaryotic ribosomal protein P1/P2 family. As to quaternary structure, part of the 50S ribosomal subunit. Homodimer, it forms part of the ribosomal stalk which helps the ribosome interact with GTP-bound translation factors. Forms a heptameric uL10/P0(P1)2(P1)2(P1)2 complex, where uL10/P0 forms an elongated spine to which the P1 dimers bind in a sequential fashion.

Forms part of the ribosomal stalk, playing a central role in the interaction of the ribosome with GTP-bound translation factors. The protein is Large ribosomal subunit protein P1 of Methanothermobacter thermautotrophicus (strain ATCC 29096 / DSM 1053 / JCM 10044 / NBRC 100330 / Delta H) (Methanobacterium thermoautotrophicum).